The following is a 319-amino-acid chain: Coproporphyrin III ferrochelatase 2 (319 aa).

Fe-coproporphyrin III contacts are provided by residues Tyr-13, Arg-30, Arg-46 to Tyr-47, Ser-54, and Tyr-125. Fe(2+)-binding residues include His-181 and Glu-262.

Belongs to the ferrochelatase family.

It localises to the cytoplasm. The enzyme catalyses Fe-coproporphyrin III + 2 H(+) = coproporphyrin III + Fe(2+). It participates in porphyrin-containing compound metabolism; protoheme biosynthesis. In terms of biological role, involved in coproporphyrin-dependent heme b biosynthesis. Catalyzes the insertion of ferrous iron into coproporphyrin III to form Fe-coproporphyrin III. This Bacillus thuringiensis subsp. konkukian (strain 97-27) protein is Coproporphyrin III ferrochelatase 2.